The chain runs to 105 residues: Met repressor (105 aa).

This sequence belongs to the MetJ family. In terms of assembly, homodimer.

It localises to the cytoplasm. Functionally, this regulatory protein, when combined with SAM (S-adenosylmethionine) represses the expression of the methionine regulon and of enzymes involved in SAM synthesis. This Klebsiella pneumoniae subsp. pneumoniae (strain ATCC 700721 / MGH 78578) protein is Met repressor.